The sequence spans 71 residues: UPF0352 protein Spea_1764 (71 aa).

It belongs to the UPF0352 family.

This is UPF0352 protein Spea_1764 from Shewanella pealeana (strain ATCC 700345 / ANG-SQ1).